The following is a 482-amino-acid chain: D-inositol 3-phosphate glycosyltransferase (482 aa).

Residue H63 coordinates 1D-myo-inositol 3-phosphate. UDP-N-acetyl-alpha-D-glucosamine-binding positions include Q69–P70 and G77. Residues D74–N79, K132, Y165, T189, and R209 contribute to the 1D-myo-inositol 3-phosphate site. Residues R289, K294, and Q355 each coordinate UDP-N-acetyl-alpha-D-glucosamine. Mg(2+) is bound by residues Y364, R365, and A367. E377 and E385 together coordinate UDP-N-acetyl-alpha-D-glucosamine. T391 contacts Mg(2+).

This sequence belongs to the glycosyltransferase group 1 family. MshA subfamily. As to quaternary structure, homodimer.

The enzyme catalyses 1D-myo-inositol 3-phosphate + UDP-N-acetyl-alpha-D-glucosamine = 1D-myo-inositol 2-acetamido-2-deoxy-alpha-D-glucopyranoside 3-phosphate + UDP + H(+). Catalyzes the transfer of a N-acetyl-glucosamine moiety to 1D-myo-inositol 3-phosphate to produce 1D-myo-inositol 2-acetamido-2-deoxy-glucopyranoside 3-phosphate in the mycothiol biosynthesis pathway. This Salinispora tropica (strain ATCC BAA-916 / DSM 44818 / JCM 13857 / NBRC 105044 / CNB-440) protein is D-inositol 3-phosphate glycosyltransferase.